The primary structure comprises 500 residues: Serine/threonine-protein phosphatase 2A 56 kDa regulatory subunit beta isoform (500 aa).

Residues 1–19 (METKLPPASTPTSPSSPGL) show a composition bias toward low complexity. Disordered regions lie at residues 1-55 (METK…YQSN) and 474-500 (GTQG…GGQS). Residues serine 32, serine 35, serine 44, serine 46, serine 47, and serine 48 each carry the phosphoserine; by CLK2 modification. Basic residues predominate over residues 34-45 (RSLRRARPRRSH).

It belongs to the phosphatase 2A regulatory subunit B56 family. As to quaternary structure, component of the serine/threonine-protein phosphatase 2A complex (PP2A). This complex consists of a common heterodimeric core enzyme, composed of a 36 kDa catalytic subunit (subunit C) and a 65 kDa constant scaffold subunit (PR65 or subunit A), that associates with a variety of regulatory subunits. Proteins that associate with the core dimer include three families of regulatory subunits B (the R2/B/PR55/B55, R3/B''/PR72/PR130/PR59 and R5/B'/B56 families), the 48 kDa variable regulatory subunit, viral proteins, and cell signaling molecules. Interacts with SGO1. Interacts with AKT1. As to expression, highly expressed in brain.

The protein resides in the nucleus. Its function is as follows. As the regulatory component of the serine/threonine-protein phosphatase 2A (PP2A) holoenzyme, modulates substrate specificity, subcellular localization, and responsiveness to phosphorylation. The phosphorylated form mediates the interaction between PP2A and AKT1, leading to AKT1 dephosphorylation. The protein is Serine/threonine-protein phosphatase 2A 56 kDa regulatory subunit beta isoform (PPP2R5B) of Oryctolagus cuniculus (Rabbit).